The chain runs to 283 residues: Methylamine utilization ferredoxin-type protein MauN (283 aa).

4Fe-4S ferredoxin-type domains lie at 217–248 (VRVS…PALK) and 251–280 (GSPL…MASR). Positions 227, 230, 233, 237, 260, 263, 266, and 270 each coordinate [4Fe-4S] cluster.

It participates in one-carbon metabolism; methylamine degradation. Functionally, involved in electron transfer. The polypeptide is Methylamine utilization ferredoxin-type protein MauN (mauN) (Paracoccus denitrificans (strain Pd 1222)).